We begin with the raw amino-acid sequence, 1489 residues long: Type-2 histone deacetylase 1 (1489 aa).

Composition is skewed to low complexity over residues 135–163, 190–259, 281–306, and 325–399; these read NNNNINNNNNSNGSNSSNNSHNGGSSPSG, SNGN…SRNL, NIINNNSNNNTNNNNNIMNGTTTSTT, and SPTS…NINN. Disordered regions lie at residues 135–259, 281–556, 915–935, 955–1024, and 1151–1185; these read NNNN…SRNL, NIIN…NYQQ, NNNNNNNNNNNNNNNEEDDQL, NISK…RDRD, and STGINQFSTSTPITTTGTATVTPGSTTSSTNGEQC. The span at 400-430 shows a compositional bias: polar residues; sequence VANGTPRPSLQTSRLQGKLPSPQQYNTSPSH. 4 stretches are compositionally biased toward low complexity: residues 431–450, 486–553, 915–928, and 959–988; these read QQYPSPKNNNNSNNIIPIQS, NNNN…NNSN, NNNNNNNNNNNNNN, and NNNNNNNNNNNNNNNNNNNNNNNNNNNNNN. Basic and acidic residues-rich tracts occupy residues 989-1001 and 1010-1024; these read RNRDRDREFERDN and IEKERNRNNRIRDRD. The span at 1158-1180 shows a compositional bias: low complexity; that stretch reads STSTPITTTGTATVTPGSTTSST. Residue histidine 1232 is the Proton acceptor of the active site. Residues 1325 to 1335 show a composition bias toward acidic residues; the sequence is EQNDYDDDDNN. The interval 1325-1374 is disordered; it reads EQNDYDDDDNNNDVNNNNNNNNNNNNNNNNNNNNKNNNNNNSNSITQQST. Residues 1336-1367 show a composition bias toward low complexity; it reads NDVNNNNNNNNNNNNNNNNNNNNKNNNNNNSN.

This sequence belongs to the histone deacetylase family. HD type 2 subfamily.

It localises to the nucleus. Its subcellular location is the cytoplasm. It carries out the reaction N(6)-acetyl-L-lysyl-[histone] + H2O = L-lysyl-[histone] + acetate. Functionally, responsible for the deacetylation of lysine residues on the N-terminal part of the core histones (H2A, H2B, H3 and H4). Histone deacetylation plays an important role in transcriptional regulation, cell cycle progression and developmental events. Histone deacetylases act via the formation of large multiprotein complexes. The polypeptide is Type-2 histone deacetylase 1 (hdaD) (Dictyostelium discoideum (Social amoeba)).